The primary structure comprises 65 residues: Large ribosomal subunit protein bL35 (65 aa).

Positions 1-11 (MPKIKTRRSAA) are enriched in basic residues. 2 disordered regions span residues 1 to 24 (MPKIKTRRSAAKRFSVTGSGKFKR) and 41 to 65 (RMRLGQSATVDSTNEKAVRRMMPYA).

This sequence belongs to the bacterial ribosomal protein bL35 family.

This Nitratidesulfovibrio vulgaris (strain DSM 19637 / Miyazaki F) (Desulfovibrio vulgaris) protein is Large ribosomal subunit protein bL35.